The primary structure comprises 386 residues: 2-isopropylmalate synthase (386 aa).

Residues 15–269 form the Pyruvate carboxyltransferase domain; the sequence is IRIFDTTLRD…ETNVKTWKLY (255 aa). A divalent metal cation contacts are provided by Asp24, His207, His209, and Asn243.

This sequence belongs to the alpha-IPM synthase/homocitrate synthase family. As to quaternary structure, homodimer. It depends on a divalent metal cation as a cofactor.

The catalysed reaction is 3-methyl-2-oxobutanoate + acetyl-CoA + H2O = (2S)-2-isopropylmalate + CoA + H(+). It participates in amino-acid biosynthesis; L-leucine biosynthesis; L-leucine from 3-methyl-2-oxobutanoate: step 1/4. In terms of biological role, catalyzes the condensation of the acetyl group of acetyl-CoA with 3-methyl-2-oxobutanoate (2-oxoisovalerate) to form 3-carboxy-3-hydroxy-4-methylpentanoate (2-isopropylmalate). Carries out the first step of the leucine biosynthesis pathway. This Saccharolobus solfataricus (strain ATCC 35092 / DSM 1617 / JCM 11322 / P2) (Sulfolobus solfataricus) protein is 2-isopropylmalate synthase (leuA).